The primary structure comprises 126 residues: E3 ubiquitin-protein ligase PPP1R11 (126 aa).

The interval 1 to 25 is disordered; it reads MAEAGAGLSETVTETTVTVTTEPEN. Position 2 is an N-acetylalanine (alanine 2). The segment covering 10-22 has biased composition (low complexity); sequence ETVTETTVTVTTE. The atypical RING finger domain 1 stretch occupies residues 52–62; it reads HMGRRSSKCCC. Residues 70–126 are disordered; sequence FGESSTESDEEEEEGCGHTHCVRGHRKGRRRATLGPTPTTPPQPPDPSQPPPGPMQH. 2 positions are modified to phosphoserine: serine 73 and serine 74. Threonine 75 is modified (phosphothreonine). Residue serine 77 is modified to Phosphoserine. Residues 85-94 are atypical RING finger domain 2; it reads CGHTHCVRGH. A compositionally biased stretch (basic residues) spans 89–101; sequence HCVRGHRKGRRRA. The segment covering 107–126 has biased composition (pro residues); that stretch reads PTTPPQPPDPSQPPPGPMQH. The residue at position 109 (threonine 109) is a Phosphothreonine.

Interacts with TLR2 and UBE2D2. Auto-ubiquitinated. In terms of tissue distribution, widely expressed.

It catalyses the reaction S-ubiquitinyl-[E2 ubiquitin-conjugating enzyme]-L-cysteine + [acceptor protein]-L-lysine = [E2 ubiquitin-conjugating enzyme]-L-cysteine + N(6)-ubiquitinyl-[acceptor protein]-L-lysine.. The protein operates within protein modification; protein ubiquitination. In terms of biological role, atypical E3 ubiquitin-protein ligase which ubiquitinates TLR2 at 'Lys-754' leading to its degradation by the proteasome. Plays a role in regulating inflammatory cytokine release and gram-positive bacterial clearance by functioning, in part, through the ubiquitination and degradation of TLR2. Inhibitor of protein phosphatase 1. The sequence is that of E3 ubiquitin-protein ligase PPP1R11 (PPP1R11) from Homo sapiens (Human).